A 444-amino-acid polypeptide reads, in one-letter code: Glutamyl-tRNA reductase (444 aa).

Substrate contacts are provided by residues 49-52 (TCNR), S109, 114-116 (ETQ), and Q120. C50 functions as the Nucleophile in the catalytic mechanism. An NADP(+)-binding site is contributed by 189–194 (GAGKMG).

The protein belongs to the glutamyl-tRNA reductase family. As to quaternary structure, homodimer.

The enzyme catalyses (S)-4-amino-5-oxopentanoate + tRNA(Glu) + NADP(+) = L-glutamyl-tRNA(Glu) + NADPH + H(+). The protein operates within porphyrin-containing compound metabolism; protoporphyrin-IX biosynthesis; 5-aminolevulinate from L-glutamyl-tRNA(Glu): step 1/2. Its function is as follows. Catalyzes the NADPH-dependent reduction of glutamyl-tRNA(Glu) to glutamate 1-semialdehyde (GSA). The polypeptide is Glutamyl-tRNA reductase (Bacillus cereus (strain G9842)).